The primary structure comprises 315 residues: Replication factor C small subunit (315 aa).

An ATP-binding site is contributed by 43-50 (GSPGVGKT).

The protein belongs to the activator 1 small subunits family. RfcS subfamily. As to quaternary structure, heteromultimer composed of small subunits (RfcS) and large subunits (RfcL).

Its function is as follows. Part of the RFC clamp loader complex which loads the PCNA sliding clamp onto DNA. This chain is Replication factor C small subunit, found in Methanococcus vannielii (strain ATCC 35089 / DSM 1224 / JCM 13029 / OCM 148 / SB).